We begin with the raw amino-acid sequence, 598 residues long: Glutamine--fructose-6-phosphate aminotransferase [isomerizing] (598 aa).

The active-site Nucleophile; for GATase activity is cysteine 2. The Glutamine amidotransferase type-2 domain occupies 2–219 (CGIIGYIGPR…DGEYGIVSKD (218 aa)). SIS domains lie at 280–420 (VAEL…LVGI) and 449–588 (IAVK…PDRP). The active-site For Fru-6P isomerization activity is the lysine 593.

In terms of assembly, homodimer.

It localises to the cytoplasm. The enzyme catalyses D-fructose 6-phosphate + L-glutamine = D-glucosamine 6-phosphate + L-glutamate. Catalyzes the first step in hexosamine metabolism, converting fructose-6P into glucosamine-6P using glutamine as a nitrogen source. In Pyrococcus horikoshii (strain ATCC 700860 / DSM 12428 / JCM 9974 / NBRC 100139 / OT-3), this protein is Glutamine--fructose-6-phosphate aminotransferase [isomerizing].